We begin with the raw amino-acid sequence, 314 residues long: Acetyl-coenzyme A carboxylase carboxyl transferase subunit alpha (314 aa).

The CoA carboxyltransferase C-terminal domain occupies 32–289 (EIDMLEASLE…KSAFVAQLDS (258 aa)).

The protein belongs to the AccA family. Acetyl-CoA carboxylase is a heterohexamer composed of biotin carboxyl carrier protein (AccB), biotin carboxylase (AccC) and two subunits each of ACCase subunit alpha (AccA) and ACCase subunit beta (AccD).

The protein resides in the cytoplasm. The catalysed reaction is N(6)-carboxybiotinyl-L-lysyl-[protein] + acetyl-CoA = N(6)-biotinyl-L-lysyl-[protein] + malonyl-CoA. It participates in lipid metabolism; malonyl-CoA biosynthesis; malonyl-CoA from acetyl-CoA: step 1/1. In terms of biological role, component of the acetyl coenzyme A carboxylase (ACC) complex. First, biotin carboxylase catalyzes the carboxylation of biotin on its carrier protein (BCCP) and then the CO(2) group is transferred by the carboxyltransferase to acetyl-CoA to form malonyl-CoA. In Staphylococcus aureus (strain NCTC 8325 / PS 47), this protein is Acetyl-coenzyme A carboxylase carboxyl transferase subunit alpha.